A 950-amino-acid polypeptide reads, in one-letter code: MSDKKRINQIAKETGLSNTELVATAQSLGFEVKSHSSSVTAEQAEKIIQGVKTGTDTIVKPAEKTVKAKIKTVPETAKSKQEDHPRTFAGKAVVEDPAILARIKEKEEAKKAAKTEAEPIEEVITTEKPKVAEPVKKSEPKAAAKAEETKVEKVEAKAKTVTPKAEVKTENVADKKEPVVTEEKKKSLTQKPRIQIKVIKRAEDIKKEQAAARPEKKKFDKNRNDRNNRNDNRRPNQNGNGQGHSQGGNHYDKNRPAGQGQNQGQKRDKFASSGSSSTSDTFTPAASGKNNRRDRDRKKTDSNRDNTKDGNRKGGPLRVNDNRNQVRNARNSNWNQKGGRGRYQNNQSSSVPATQRKFHELPESLEYEVGMNVQDIAKSIKREPAEIIKKLFMMGTMVNQNQSLDEDTIELILMDYGVTPLKKVEEDKSDIERLFVEDGYLNEDKMVERPAVVTIMGHVDHGKTTLLDRFRESRVTEGEAGGITQHIGAYQIKTNGKKITFLDTPGHEAFTSMRARGASVTDITILVVAADDGVMPQTIEAINHSKAAGVPIIVAINKIDKPGANPQRVTQELTEHGVFPVAWDPENGSEFVEISAKFNQNLEELLDTVLLVAEVQELKADPSVRAIGTVVEARLDQGKGAIATLLVQQGTLHIQDPIVVGNTYGRVRTMTNDLGRRIKEAGPSTPIELTGLSDVPQAGDHFAVFEDEKAARAAGEERAKRAQLIKRQNTRRVNLDNLFDTLKEGQTKSVNIIIKADVQGSAEALAASLQKIEVEGVKVDIVHSAVGAISESDISLAAASNAIIIGFNVRPTGLAREQAAQEEVDIRLHSIIYKVIEEVETAMRGMLDPEFKEEIIGEAIVRETFNVSKVGTIAGFMVIRGKVTRDASVRVIREGVVIHDGAIASLKHFKDDVKEVGNAQEGGLMVEDFNDVEIDDTFEVYKMVEIERKK.

4 stretches are compositionally biased toward basic and acidic residues: residues Lys128–Ala158, Ala165–Lys186, Lys200–Arg234, and Asn291–Arg312. Positions Lys128–Thr354 are disordered. Composition is skewed to polar residues over residues Asn322–Gln336 and Tyr343–Ala353. Residues Glu448–Lys619 enclose the tr-type G domain. Residues Gly457–Thr464 form a G1 region. Gly457–Thr464 is a binding site for GTP. The segment at Gly482 to His486 is G2. Positions Asp503–Gly506 are G3. GTP-binding positions include Asp503–His507 and Asn557–Asp560. Residues Asn557–Asp560 form a G4 region. The tract at residues Ser595 to Lys597 is G5.

This sequence belongs to the TRAFAC class translation factor GTPase superfamily. Classic translation factor GTPase family. IF-2 subfamily.

Its subcellular location is the cytoplasm. Its function is as follows. One of the essential components for the initiation of protein synthesis. Protects formylmethionyl-tRNA from spontaneous hydrolysis and promotes its binding to the 30S ribosomal subunits. Also involved in the hydrolysis of GTP during the formation of the 70S ribosomal complex. This Lactococcus lactis subsp. cremoris (strain MG1363) protein is Translation initiation factor IF-2.